Reading from the N-terminus, the 597-residue chain is Phragmoplastin interacting protein 1 (597 aa).

The tract at residues 18 to 136 is disordered; it reads ESLSVSVSET…KTPKKAEEGN (119 aa). A compositionally biased stretch (polar residues) spans 20–29; sequence LSVSVSETNP. Residues 30–40 show a composition bias toward low complexity; it reads QSQSLKLLLDS. Composition is skewed to basic residues over residues 43–53 and 112–129; these read HKPRLSKREKR and QKKKNKKKKKKRKVNKTP. Positions 112-119 match the Nuclear localization signal motif; that stretch reads QKKKNKKK. 2 RRM domains span residues 161–238 and 262–338; these read NKLY…QYVK and NRVY…CALK. 3 CCHC-type zinc fingers span residues 397 to 411, 481 to 495, and 576 to 591; these read CYECGEKGHLSTACP and CYECGEKGHLSSACPN.

As to quaternary structure, interacts with phragmoplastins (e.g. DRP1A, DRP1B, DRP1C, DRP1D and DRP1E) and with GTP-bound ARAC11/ROP1 as well as with Ran2 transcripts.

The protein resides in the nucleus. The protein localises to the cell membrane. It localises to the cytoplasm. Its subcellular location is the cytoskeleton. It is found in the phragmoplast. Functionally, RNA-binding protein which mediates polarized mRNA (e.g. Ran2 transcripts mRNA) transport from the nucleus to the vicinity of the cell plate during cytokinesis and phragmoplast formation. The sequence is that of Phragmoplastin interacting protein 1 from Arabidopsis thaliana (Mouse-ear cress).